Reading from the N-terminus, the 381-residue chain is Tumor necrosis factor receptor superfamily member 10B (381 aa).

The signal sequence occupies residues 1-52 (MEPPGPSTPTASAAARADHYTPGLRPLPKRRLLYSFALLLAVLQAVFVPVTA). TNFR-Cys repeat units lie at residues 26–86 (PLPK…GNCK), 87–129 (PCRE…NTVC), and 130–169 (RCKP…NRKC). The Extracellular portion of the chain corresponds to 53–180 (NPAHNRPAGL…SKTAWASWHK (128 aa)). Disulfide bonds link Cys74/Cys85, Cys88/Cys105, Cys108/Cys121, Cys111/Cys129, Cys131/Cys145, Cys148/Cys161, and Cys151/Cys169. Residues 181–201 (LGLWIGLLVPVVLLIGALLVW) traverse the membrane as a helical segment. The Cytoplasmic portion of the chain corresponds to 202–381 (KTGAWRQWLL…ETGPGGSQCV (180 aa)). The segment at 228 to 260 (HSSLLDRQTSSTTNDSNHNTEPGKTQKTGKKLL) is disordered. Residues 236–247 (TSSTTNDSNHNT) are compositionally biased toward low complexity. In terms of domain architecture, Death spans 273–356 (KFIFEYCSDI…DAMEKIEDYA (84 aa)). Residue Arg293 is glycosylated ((Microbial infection) N-beta-linked (GlcNAc) arginine).

Monomer. Can interact with TRADD and RIPK1. Three TNFRSF10B molecules interact with the TNFSF10 homotrimer. In the absence of stimulation, interacts with BIRC2, DDX3X and GSK3B. The interaction with BIRC2 and DDX3X is further enhanced upon receptor stimulation and accompanied by DDX3X and BIRC2 cleavage. Post-translationally, (Microbial infection) Glycosylated at Arg-293 by S.typhimurium protein Ssek3. In terms of tissue distribution, highly expressed in heart, lung and kidney.

The protein localises to the membrane. Receptor for the cytotoxic ligand TNFSF10/TRAIL. The adapter molecule FADD recruits caspase-8 to the activated receptor. The resulting death-inducing signaling complex (DISC) performs caspase-8 proteolytic activation which initiates the subsequent cascade of caspases (aspartate-specific cysteine proteases) mediating apoptosis. Promotes the activation of NF-kappa-B. Essential for ER stress-induced apoptosis. This is Tumor necrosis factor receptor superfamily member 10B (Tnfrsf10b) from Mus musculus (Mouse).